Reading from the N-terminus, the 249-residue chain is Glucosamine-6-phosphate deaminase (249 aa).

Catalysis depends on D67, which acts as the Proton acceptor; for enolization step. The For ring-opening step role is filled by N136. H138 acts as the Proton acceptor; for ring-opening step in catalysis. E143 (for ring-opening step) is an active-site residue.

Belongs to the glucosamine/galactosamine-6-phosphate isomerase family. NagB subfamily.

It catalyses the reaction alpha-D-glucosamine 6-phosphate + H2O = beta-D-fructose 6-phosphate + NH4(+). It participates in amino-sugar metabolism; N-acetylneuraminate degradation; D-fructose 6-phosphate from N-acetylneuraminate: step 5/5. Its function is as follows. Catalyzes the reversible isomerization-deamination of glucosamine 6-phosphate (GlcN6P) to form fructose 6-phosphate (Fru6P) and ammonium ion. This chain is Glucosamine-6-phosphate deaminase, found in Clostridioides difficile (strain 630) (Peptoclostridium difficile).